The chain runs to 782 residues: General transcription and DNA repair factor IIH helicase/translocase subunit XPB (782 aa).

Residues 1 to 11 (MGKRDRADRDK) show a composition bias toward basic and acidic residues. 2 disordered regions span residues 1–51 (MGKR…ESGT) and 220–240 (ISKTAEGSGGPSTSRVTDPQG). The Nuclear localization signal signature appears at 6-18 (RADRDKKKSRKRH). Positions 21–30 (DEEDDEEDAP) are enriched in acidic residues. The region spanning 327 to 488 (MFGNGRARSG…DLNFLIGPKL (162 aa)) is the Helicase ATP-binding domain. 340–347 (LPCGAGKS) contacts ATP. The DEVH box signature appears at 441 to 444 (DEVH). Residues 542 to 702 (RACQFLIKFH…LAGMEEEDLA (161 aa)) form the Helicase C-terminal domain. Residue serine 686 is modified to Phosphoserine. Serine 751 is subject to Phosphoserine; by CK2.

Belongs to the helicase family. RAD25/XPB subfamily. In terms of assembly, component of the 7-subunit TFIIH core complex composed of XPB/ERCC3, XPD/ERCC2, GTF2H1, GTF2H2, GTF2H3, GTF2H4 and GTF2H5, which is active in NER. The core complex associates with the 3-subunit CDK-activating kinase (CAK) module composed of CCNH/cyclin H, CDK7 and MNAT1 to form the 10-subunit holoenzyme (holo-TFIIH) active in transcription. Interacts with PUF60. Interacts with ATF7IP. Interacts with KAT2A; leading to KAT2A recruitment to promoters and acetylation of histones. Part of TBP-based Pol II pre-initiation complex (PIC), in which Pol II core assembles with general transcription factors and other specific initiation factors including GTF2E1, GTF2E2, GTF2F1, GTF2F2, TCEA1, ERCC2, ERCC3, GTF2H2, GTF2H3, GTF2H4, GTF2H5, GTF2A1, GTF2A2, GTF2B and TBP; this large multi-subunit PIC complex mediates DNA unwinding and targets Pol II core to the transcription start site where the first phosphodiester bond forms. In terms of processing, phosphorylation on Ser-751 by CK2 controls the 5'-excision activity of ERCC1-XPF endonuclease; phosphorylated protein inhibits the excision activity and thus NER. Dephosphorylation reactivates the 5'-excision step. Phosphorylation has no effect on transcription or the 3'-5' helicase activity.

The protein localises to the nucleus. The enzyme catalyses Couples ATP hydrolysis with the unwinding of duplex DNA by translocating in the 3'-5' direction.. It catalyses the reaction ATP + H2O = ADP + phosphate + H(+). Phosphorylation on Ser-751 by CK2 controls the 5'-excision activity of ERCC1-XPF endonuclease; phosphorylated protein inhibits the excision activity and thus NER. ATPase activity is stimulated by TFIIH subunit p52 (GTF2H4). DNA translocase activity by this subunit in TFIIH is stimulated by XPA, ERCC5/XPG and XFP plus ERCC1. Functionally, ATP-dependent 3'-5' DNA helicase/translocase; binds dsDNA rather than ssDNA, unzipping it in a translocase rather than classical helicase activity. Component of the general transcription and DNA repair factor IIH (TFIIH) core complex. When complexed to CDK-activating kinase (CAK), involved in RNA transcription by RNA polymerase II. The ATPase activity of XPB/ERCC3, but not its helicase activity, is required for DNA opening; it may wrap around the damaged DNA wedging it open, causing localized melting and twisting that allows XPD/ERCC2 helicase to anchor. The ATP-dependent helicase activity of XPB/ERCC3 may be required for promoter escape. Also involved in transcription-coupled nucleotide excision repair (NER) of damaged DNA. In NER, TFIIH acts by opening DNA around the lesion to allow the excision of the damaged oligonucleotide and its replacement by a new DNA fragment. The structure of the TFIIH transcription complex differs from the NER-TFIIH complex; large movements by XPD/ERCC2 and XPB/ERCC3 are stabilized by XPA. This chain is General transcription and DNA repair factor IIH helicase/translocase subunit XPB (ERCC3), found in Macaca fascicularis (Crab-eating macaque).